The primary structure comprises 912 residues: MINSLLTRVFGSRNERQLRQLNRLVTQINALEPTIEKLSDAELQAKTPEFKQRLAAGESLDKILPEAFAVCREASRRVLGMRHYDVQLIGGMVLHLGKIAEMRTGEGKTLVATLPVYLNALEGQGVHVVTVNDYLARRDAAQMGKLYNWLGLSVGVVYPGMPHSDKHAAYAADITYGTNNEFGFDYLRDNMALSRADRYQRKLHYAIVDEVDSILIDEARTPLIISGPADESPELYIRVNRIVPQLTKQESEEGEGDYWIDEKGKQVHLSEAGMGHAEELLLQAGILENADDGLYAAQNLSVVHHLNAALRAHAIYQRDVDYIVRDGEVVIVDEFTGRTLSGRRWSDGLHQAVEAKEGVPVQRENQTLASITFQNLFRMYKKLSGMTGTADTEAYEFQSIYGLEVVVIPTNRPTVRKDHPDQVFLNRKGKFNAVLADIEDCAKRGQPVLVGTTSIETSEMLSEHLRKAGVKHEVLNAKQHEREATIVANAGQPGAVTIATNMAGRGTDIVLGGSLEAEYHVLGEDATEEARFKIKTDWQRRHDAVKAAGGLHIIGTERHESRRIDNQLRGRAGRQGDPGSSRFYLSLEDNLMRIFASDWVQKAMRMMGMKEDDVIEDRLVSRQIEKAQRKVEAHNFDIRKNLLDFDDVNNDQRKVIYAQRDDLLDAESVKDNVDGIRGDVIYDLVARFVPPNSVDEQWDLQGLEATLESELGMPLALRELAKTQEELDAEQIAAKVQTAVDAHFAEKEAAVGADTMRALEKHVMLTVLDQGWKEHLAKMDYLRQGIYLRGYAQKQPKQEYKKEAFELFSEMLENVKREVINLLARVRIRSEEEVAELEEQERRQAEARLLASQFQHQDAGGYGADEEVEQMQGGNAPVPVSQVTRDEPKVGRNDPCPCGSGKKYKHCHGQLS.

Residues glutamine 87, 105-109 (GEGKT), and aspartate 508 each bind ATP. Positions 855 to 912 (QHQDAGGYGADEEVEQMQGGNAPVPVSQVTRDEPKVGRNDPCPCGSGKKYKHCHGQLS) are disordered. The Zn(2+) site is built by cysteine 896, cysteine 898, cysteine 907, and histidine 908. Positions 902–912 (KKYKHCHGQLS) are enriched in basic residues.

This sequence belongs to the SecA family. In terms of assembly, monomer and homodimer. Part of the essential Sec protein translocation apparatus which comprises SecA, SecYEG and auxiliary proteins SecDF-YajC and YidC. Zn(2+) is required as a cofactor.

The protein resides in the cell inner membrane. It localises to the cytoplasm. It carries out the reaction ATP + H2O + cellular proteinSide 1 = ADP + phosphate + cellular proteinSide 2.. In terms of biological role, part of the Sec protein translocase complex. Interacts with the SecYEG preprotein conducting channel. Has a central role in coupling the hydrolysis of ATP to the transfer of proteins into and across the cell membrane, serving both as a receptor for the preprotein-SecB complex and as an ATP-driven molecular motor driving the stepwise translocation of polypeptide chains across the membrane. The polypeptide is Protein translocase subunit SecA (Xanthomonas campestris pv. campestris (strain 8004)).